Consider the following 139-residue polypeptide: Diuretic hormone 41 (139 aa).

Residues 1–20 (MMWWALWCAVVVAAGSGVAA) form the signal peptide. Positions 21 to 79 (APAPDSLSPLDMVQMDSSAPDDETLYAMSPMAARYSAGAPWLYLLADMPRDSQTGSGRV) are excised as a propeptide. Ile122 carries the post-translational modification Isoleucine amide.

It belongs to the sauvagine/corticotropin-releasing factor/urotensin I family. As to expression, expressed in corpora cardiaca (CC), corpora allata (CA), antennal lobe (AL) and gnathal ganglion (GNG) (at protein level). Expression in CC and CA detected in all animals, in GNG in most animals, expression in AL detected in few animals (at protein level).

It localises to the secreted. Its function is as follows. Regulation of fluid secretion. The chain is Diuretic hormone 41 from Agrotis ipsilon (Black cutworm moth).